A 422-amino-acid polypeptide reads, in one-letter code: Histone deacetylase B (422 aa).

Position 102 (Asp-102) interacts with substrate. His-144 functions as the Proton acceptor in the catalytic mechanism. Residue Gly-152 coordinates substrate. Asp-179, His-181, and Asp-268 together coordinate a divalent metal cation. A substrate-binding site is contributed by Tyr-307. The segment at 399-422 (IDFDRDEDSKENMDKRKKKHNDFS) is disordered. A compositionally biased stretch (basic residues) spans 413–422 (KRKKKHNDFS).

It belongs to the histone deacetylase family. HD type 1 subfamily.

It localises to the nucleus. It is found in the cytoplasm. The catalysed reaction is N(6)-acetyl-L-lysyl-[histone] + H2O = L-lysyl-[histone] + acetate. Its activity is regulated as follows. Its activity is inhibited by trichostatin A (TSA), a well known histone deacetylase inhibitor. Cytosolic activity is refractory to inhibition by TSA, while the nuclear activity is inhibited completely. In terms of biological role, responsible for the deacetylation of lysine residues on the N-terminal part of the core histones (H2A, H2B, H3 and H4). Histone deacetylation plays an important role in transcriptional regulation, cell cycle progression and developmental events. Histone deacetylases act via the formation of large multiprotein complexes. May play a role in the regulation of the timing of gene expression during the development and in the definition aspects of the phenotype that mediate social behavior in genetically heterogeneous groups. In Dictyostelium discoideum (Social amoeba), this protein is Histone deacetylase B (hdaB).